The sequence spans 156 residues: 6,7-dimethyl-8-ribityllumazine synthase (156 aa).

5-amino-6-(D-ribitylamino)uracil-binding positions include Phe22, 57 to 59 (AYE), and 81 to 83 (TVI). 86-87 (GT) is a binding site for (2S)-2-hydroxy-3-oxobutyl phosphate. His89 acts as the Proton donor in catalysis. Phe114 is a 5-amino-6-(D-ribitylamino)uracil binding site. Arg128 provides a ligand contact to (2S)-2-hydroxy-3-oxobutyl phosphate.

This sequence belongs to the DMRL synthase family. Forms an icosahedral capsid composed of 60 subunits, arranged as a dodecamer of pentamers.

The enzyme catalyses (2S)-2-hydroxy-3-oxobutyl phosphate + 5-amino-6-(D-ribitylamino)uracil = 6,7-dimethyl-8-(1-D-ribityl)lumazine + phosphate + 2 H2O + H(+). Its pathway is cofactor biosynthesis; riboflavin biosynthesis; riboflavin from 2-hydroxy-3-oxobutyl phosphate and 5-amino-6-(D-ribitylamino)uracil: step 1/2. In terms of biological role, catalyzes the formation of 6,7-dimethyl-8-ribityllumazine by condensation of 5-amino-6-(D-ribitylamino)uracil with 3,4-dihydroxy-2-butanone 4-phosphate. This is the penultimate step in the biosynthesis of riboflavin. The chain is 6,7-dimethyl-8-ribityllumazine synthase from Sodalis glossinidius (strain morsitans).